Here is a 226-residue protein sequence, read N- to C-terminus: Peroxiredoxin-like 2C (226 aa).

It belongs to the peroxiredoxin-like PRXL2 family. PRXL2C subfamily.

The polypeptide is Peroxiredoxin-like 2C (prxl2c) (Takifugu rubripes (Japanese pufferfish)).